The following is a 72-amino-acid chain: Small ribosomal subunit protein bS20 (72 aa).

The protein belongs to the bacterial ribosomal protein bS20 family.

In terms of biological role, binds directly to 16S ribosomal RNA. This Aeromonas hydrophila protein is Small ribosomal subunit protein bS20 (rpsT).